Reading from the N-terminus, the 137-residue chain is Large-conductance mechanosensitive channel (137 aa).

Helical transmembrane passes span 10 to 30 (FAMR…AAFG) and 76 to 96 (GVFL…FMAI).

The protein belongs to the MscL family. Homopentamer.

It localises to the cell inner membrane. Channel that opens in response to stretch forces in the membrane lipid bilayer. May participate in the regulation of osmotic pressure changes within the cell. The chain is Large-conductance mechanosensitive channel from Erwinia tasmaniensis (strain DSM 17950 / CFBP 7177 / CIP 109463 / NCPPB 4357 / Et1/99).